A 565-amino-acid chain; its full sequence is Adenine deaminase 1 (565 aa).

This sequence belongs to the metallo-dependent hydrolases superfamily. Adenine deaminase family. It depends on Mn(2+) as a cofactor.

It carries out the reaction adenine + H2O + H(+) = hypoxanthine + NH4(+). The chain is Adenine deaminase 1 from Rhizobium etli (strain ATCC 51251 / DSM 11541 / JCM 21823 / NBRC 15573 / CFN 42).